A 120-amino-acid chain; its full sequence is NADH dehydrogenase [ubiquinone] 1 subunit C2 (120 aa).

Residues 57–76 (GLHRQLLFVTSFVFAGYFYL) traverse the membrane as a helical segment.

It belongs to the complex I NDUFC2 subunit family. Complex I is composed of 45 different subunits. Interacts with TMEM242.

The protein localises to the mitochondrion inner membrane. Its function is as follows. Accessory subunit of the mitochondrial membrane respiratory chain NADH dehydrogenase (Complex I), that is believed not to be involved in catalysis but required for the complex assembly. Complex I functions in the transfer of electrons from NADH to the respiratory chain. The immediate electron acceptor for the enzyme is believed to be ubiquinone. This is NADH dehydrogenase [ubiquinone] 1 subunit C2 from Mus musculus (Mouse).